A 159-amino-acid chain; its full sequence is Cytochrome b6-f complex subunit 4 (159 aa).

The next 3 helical transmembrane spans lie at 35–55, 93–113, and 127–147; these read ILIF…LAVL, LLGV…PFIE, and ATAV…GAMI.

It belongs to the cytochrome b family. PetD subfamily. As to quaternary structure, the 4 large subunits of the cytochrome b6-f complex are cytochrome b6, subunit IV (17 kDa polypeptide, PetD), cytochrome f and the Rieske protein, while the 4 small subunits are PetG, PetL, PetM and PetN. The complex functions as a dimer.

The protein resides in the cell inner membrane. Its function is as follows. Component of the cytochrome b6-f complex, which mediates electron transfer between photosystem II (PSII) and photosystem I (PSI), cyclic electron flow around PSI, and state transitions. The protein is Cytochrome b6-f complex subunit 4 of Gloeobacter violaceus (strain ATCC 29082 / PCC 7421).